A 327-amino-acid chain; its full sequence is GMP reductase (327 aa).

The active-site Thioimidate intermediate is the C176. 205–228 contributes to the NADP(+) binding site; the sequence is IIADGGIRTHGDIAKSIRFGASMV.

The protein belongs to the IMPDH/GMPR family. GuaC type 2 subfamily.

The enzyme catalyses IMP + NH4(+) + NADP(+) = GMP + NADPH + 2 H(+). Functionally, catalyzes the irreversible NADPH-dependent deamination of GMP to IMP. It functions in the conversion of nucleobase, nucleoside and nucleotide derivatives of G to A nucleotides, and in maintaining the intracellular balance of A and G nucleotides. The polypeptide is GMP reductase (Streptococcus pyogenes serotype M6 (strain ATCC BAA-946 / MGAS10394)).